Reading from the N-terminus, the 101-residue chain is Large ribosomal subunit protein uL24 (101 aa).

The protein belongs to the universal ribosomal protein uL24 family. As to quaternary structure, part of the 50S ribosomal subunit.

One of two assembly initiator proteins, it binds directly to the 5'-end of the 23S rRNA, where it nucleates assembly of the 50S subunit. Functionally, one of the proteins that surrounds the polypeptide exit tunnel on the outside of the subunit. The chain is Large ribosomal subunit protein uL24 from Streptococcus thermophilus (strain ATCC BAA-491 / LMD-9).